Reading from the N-terminus, the 606-residue chain is Chaperone protein DnaK (606 aa).

Position 174 is a phosphothreonine; by autocatalysis (Thr-174). Positions 579–593 (ASAAGNPGQGQTNEN) are enriched in polar residues. A disordered region spans residues 579–606 (ASAAGNPGQGQTNENPGGKTIDGDYKVN).

Belongs to the heat shock protein 70 family.

Its function is as follows. Acts as a chaperone. The protein is Chaperone protein DnaK of Dictyoglomus thermophilum (strain ATCC 35947 / DSM 3960 / H-6-12).